Consider the following 580-residue polypeptide: Long-chain-fatty-acid--AMP ligase FadD28 (580 aa).

The interval 421–440 (SERTFGGKIVTPSPGTPEGP) is disordered.

The protein belongs to the ATP-dependent AMP-binding enzyme family.

It catalyses the reaction holo-[mycocerosate synthase] + a long-chain fatty acid + ATP = a long-chain fatty acyl-[mycocerosate synthase] + AMP + diphosphate. The catalysed reaction is a long-chain fatty acid + ATP + H(+) = a long-chain fatty acyl-AMP + diphosphate. It carries out the reaction holo-[mycocerosate synthase] + a long-chain fatty acyl-AMP = a long-chain fatty acyl-[mycocerosate synthase] + AMP + H(+). Its pathway is lipid metabolism; fatty acid biosynthesis. Involved in the biosynthesis of phthiocerol dimycocerosate (PDIM), a cell wall-associated lipid found only in pathogenic mycobacteria. Catalyzes the activation of long-chain fatty acids as acyl-adenylates (acyl-AMP), which are then transferred to the multifunctional polyketide synthase Mas for further chain extension. The sequence is that of Long-chain-fatty-acid--AMP ligase FadD28 (fadD28) from Mycobacterium bovis (strain ATCC BAA-935 / AF2122/97).